Reading from the N-terminus, the 432-residue chain is Glucose-6-phosphate isomerase (432 aa).

Residue E283 is the Proton donor of the active site. Catalysis depends on residues H304 and K418.

Belongs to the GPI family.

It is found in the cytoplasm. The catalysed reaction is alpha-D-glucose 6-phosphate = beta-D-fructose 6-phosphate. It participates in carbohydrate biosynthesis; gluconeogenesis. It functions in the pathway carbohydrate degradation; glycolysis; D-glyceraldehyde 3-phosphate and glycerone phosphate from D-glucose: step 2/4. In terms of biological role, catalyzes the reversible isomerization of glucose-6-phosphate to fructose-6-phosphate. This is Glucose-6-phosphate isomerase from Rubrobacter xylanophilus (strain DSM 9941 / JCM 11954 / NBRC 16129 / PRD-1).